The following is a 103-amino-acid chain: Nucleoid-associated protein Cgl0243/cg0297 (103 aa).

It belongs to the YbaB/EbfC family. As to quaternary structure, homodimer.

The protein localises to the cytoplasm. It is found in the nucleoid. Its function is as follows. Binds to DNA and alters its conformation. May be involved in regulation of gene expression, nucleoid organization and DNA protection. The protein is Nucleoid-associated protein Cgl0243/cg0297 of Corynebacterium glutamicum (strain ATCC 13032 / DSM 20300 / JCM 1318 / BCRC 11384 / CCUG 27702 / LMG 3730 / NBRC 12168 / NCIMB 10025 / NRRL B-2784 / 534).